A 339-amino-acid chain; its full sequence is Bifunctional phosphoglucose/phosphomannose isomerase (339 aa).

Residues 22–164 enclose the SIS domain; sequence ISVNVKAEDI…IEPVDDQIEE (143 aa). Gly41, Ser42, Ser83, Ser85, Thr88, and Arg135 together coordinate D-fructose 6-phosphate. The active-site Proton acceptor is the Glu221. Residues His237 and Lys331 each contribute to the D-fructose 6-phosphate site. The active-site Proton donor is His237. Lys331 acts as the Proton acceptor in catalysis.

The protein belongs to the PGI/PMI family. Homodimer.

It carries out the reaction alpha-D-glucose 6-phosphate = beta-D-fructose 6-phosphate. It catalyses the reaction D-mannose 6-phosphate = D-fructose 6-phosphate. Dual specificity isomerase that catalyzes the isomerization of both glucose-6-phosphate and mannose-6-phosphate to fructose-6-phosphate. This is Bifunctional phosphoglucose/phosphomannose isomerase from Caldicellulosiruptor bescii (strain ATCC BAA-1888 / DSM 6725 / KCTC 15123 / Z-1320) (Anaerocellum thermophilum).